Consider the following 61-residue polypeptide: Small ribosomal subunit protein uS14 (61 aa).

Positions 24, 27, 40, and 43 each coordinate Zn(2+).

The protein belongs to the universal ribosomal protein uS14 family. Zinc-binding uS14 subfamily. As to quaternary structure, part of the 30S ribosomal subunit. Contacts proteins S3 and S10. The cofactor is Zn(2+).

Functionally, binds 16S rRNA, required for the assembly of 30S particles and may also be responsible for determining the conformation of the 16S rRNA at the A site. This chain is Small ribosomal subunit protein uS14, found in Heliobacterium modesticaldum (strain ATCC 51547 / Ice1).